The primary structure comprises 397 residues: Argininosuccinate synthase (397 aa).

An ATP-binding site is contributed by A9 to S17. Y85 lines the L-citrulline pocket. G115 contributes to the ATP binding site. 3 residues coordinate L-aspartate: T117, N121, and D122. N121 is a binding site for L-citrulline. Residues R125, S173, E258, and Y270 each coordinate L-citrulline.

This sequence belongs to the argininosuccinate synthase family. Type 1 subfamily. Homotetramer.

It is found in the cytoplasm. It carries out the reaction L-citrulline + L-aspartate + ATP = 2-(N(omega)-L-arginino)succinate + AMP + diphosphate + H(+). It functions in the pathway amino-acid biosynthesis; L-arginine biosynthesis; L-arginine from L-ornithine and carbamoyl phosphate: step 2/3. The polypeptide is Argininosuccinate synthase (Streptococcus suis (strain 05ZYH33)).